Reading from the N-terminus, the 653-residue chain is Polyadenylate-binding protein, cytoplasmic and nuclear (653 aa).

The segment covering 1–10 has biased composition (basic and acidic residues); it reads MPSTDLKKQA. The segment at 1 to 77 is disordered; it reads MPSTDLKKQA…SVATPSGTAP (77 aa). Positions 17–27 are enriched in polar residues; that stretch reads DVNTNNEAVES. The span at 53–68 shows a compositional bias: low complexity; the sequence is AAEPSESTSTPTNASS. Positions 80–158 constitute an RRM 1 domain; it reads ASLYVGELDP…RPCRIMWSQR (79 aa). Threonine 167 is modified (phosphothreonine). 3 consecutive RRM domains span residues 168–245, 261–338, and 364–441; these read GNVF…HHVS, TNVY…RAQK, and VNLF…LAQR. Residues 569-646 form the PABC domain; sequence PERFTAADLA…AIGVLQEFVD (78 aa).

This sequence belongs to the polyadenylate-binding protein type-1 family. As to quaternary structure, interacts with cid13.

Its subcellular location is the cytoplasm. The protein resides in the nucleus. Its function is as follows. Binds the poly(A) tail of mRNA. Appears to be an important mediator of the multiple roles of the poly(A) tail in mRNA biogenesis, stability and translation. In the nucleus, involved in both mRNA cleavage and polyadenylation. Is also required for efficient mRNA export to the cytoplasm. Acts in concert with a poly(A)-specific nuclease (PAN) to affect poly(A) tail shortening, which may occur concomitantly with either nucleocytoplasmic mRNA transport or translational initiation. In the cytoplasm, stimulates translation initiation and regulates mRNA decay through translation termination-coupled poly(A) shortening, probably mediated by PAN. The polypeptide is Polyadenylate-binding protein, cytoplasmic and nuclear (pab1) (Schizosaccharomyces pombe (strain 972 / ATCC 24843) (Fission yeast)).